Here is a 577-residue protein sequence, read N- to C-terminus: Adenine deaminase (577 aa).

This sequence belongs to the metallo-dependent hydrolases superfamily. Adenine deaminase family. Mn(2+) is required as a cofactor.

The catalysed reaction is adenine + H2O + H(+) = hypoxanthine + NH4(+). In Bacillus subtilis (strain 168), this protein is Adenine deaminase (adeC).